Reading from the N-terminus, the 132-residue chain is Ribosome-binding factor A (132 aa).

It belongs to the RbfA family. As to quaternary structure, monomer. Binds 30S ribosomal subunits, but not 50S ribosomal subunits or 70S ribosomes.

It is found in the cytoplasm. In terms of biological role, one of several proteins that assist in the late maturation steps of the functional core of the 30S ribosomal subunit. Associates with free 30S ribosomal subunits (but not with 30S subunits that are part of 70S ribosomes or polysomes). Required for efficient processing of 16S rRNA. May interact with the 5'-terminal helix region of 16S rRNA. The protein is Ribosome-binding factor A of Treponema denticola (strain ATCC 35405 / DSM 14222 / CIP 103919 / JCM 8153 / KCTC 15104).